A 160-amino-acid chain; its full sequence is Probable NADH dehydrogenase [ubiquinone] 1 beta subcomplex subunit 2, mitochondrial (160 aa).

The protein belongs to the complex I NDUFB2 subunit family. As to quaternary structure, complex I is composed of 45 different subunits.

It localises to the mitochondrion inner membrane. Its function is as follows. Accessory subunit of the mitochondrial membrane respiratory chain NADH dehydrogenase (Complex I), that is believed not to be involved in catalysis. Complex I functions in the transfer of electrons from NADH to the respiratory chain. The immediate electron acceptor for the enzyme is believed to be ubiquinone. This Caenorhabditis elegans protein is Probable NADH dehydrogenase [ubiquinone] 1 beta subcomplex subunit 2, mitochondrial.